The chain runs to 475 residues: METVLKNDCSHCQESVILRENGGAGRSSNTGIQHDIICVGFGPAALAIAIAMRDRGIQRRVRFLERQPEFGWHTGMLLPGSKMQISFIKDLATIRNPRSHFTFLNYLHQKDRLVHFTNLSTHLPFREEFNDYMKWCASHFNDWVQYNQEVLSVTAVESTPGRPAEYFKLISRDVRSGELRELSANHIIVASGGEPAIPPILSTQHLPKTVIHSSTYLGSVHHLLQEKNGSYRFAVVGGGQSAVEISEDIQSRYANSKVTLVTKASALKPSDDSPFVNEIFDPSSVDKFYSLDHSARQQTLLENKATNYGVVRLPLLESVYEKLYRQKFLEPNPAKWPFRLVTGREVMGLKELPNNQIELQLKDTLSGRVESSAEVYDLVILATGYTRNPIATMLKPLEQIVEAPADGKTYCTDRDYRLRFRQGKVKRDAGIWLQGCCESSHGLSDSLLSILAVRSSELLDSILASSKRAEDHARL.

FAD is bound by residues 65–73 (ERQPEFGWH) and Gln-84. A substrate-binding site is contributed by Lys-89. Residue Val-150 participates in FAD binding. 238 to 241 (GGQS) serves as a coordination point for NADP(+). Substrate is bound by residues 277–280 (NEIF) and Asn-307. 307-309 (NYG) is a binding site for NADP(+). 446-448 (SLL) provides a ligand contact to FAD. Ser-449 contacts substrate.

It belongs to the lysine N(6)-hydroxylase/L-ornithine N(5)-oxygenase family. As to quaternary structure, homotetramer. FAD serves as cofactor.

The catalysed reaction is L-ornithine + NADPH + O2 = N(5)-hydroxy-L-ornithine + NADP(+) + H2O. It catalyses the reaction L-ornithine + NADH + O2 = N(5)-hydroxy-L-ornithine + NAD(+) + H2O. The protein operates within siderophore biosynthesis. Functionally, L-ornithine N(5)-monooxygenase; part of the gene cluster that mediates the biosynthesis of hydroxamate-containing siderophores that play a critical role in virulence via intracellular iron acquisition during macrophage infection. SID1 catalyzes the conversion of L-ornithine to N(5)-hydroxyornithine, the first step in the biosynthesis of all hydroxamate-containing siderophores. This is L-ornithine N(5)-monooxygenase from Ajellomyces capsulatus (Darling's disease fungus).